The following is a 163-amino-acid chain: Small ribosomal subunit protein uS9 (163 aa).

The tract at residues 1-41 (MAENTNDSAVLETEEELTSYTTETNAGAGTGTSTIAPGYGT) is disordered. Residues 18–38 (TSYTTETNAGAGTGTSTIAPG) are compositionally biased toward low complexity.

This sequence belongs to the universal ribosomal protein uS9 family.

In Bifidobacterium adolescentis (strain ATCC 15703 / DSM 20083 / NCTC 11814 / E194a), this protein is Small ribosomal subunit protein uS9.